Consider the following 365-residue polypeptide: Histidinol-phosphate aminotransferase (365 aa).

Lys-223 is subject to N6-(pyridoxal phosphate)lysine.

The protein belongs to the class-II pyridoxal-phosphate-dependent aminotransferase family. Histidinol-phosphate aminotransferase subfamily. As to quaternary structure, homodimer. Requires pyridoxal 5'-phosphate as cofactor.

It carries out the reaction L-histidinol phosphate + 2-oxoglutarate = 3-(imidazol-4-yl)-2-oxopropyl phosphate + L-glutamate. The protein operates within amino-acid biosynthesis; L-histidine biosynthesis; L-histidine from 5-phospho-alpha-D-ribose 1-diphosphate: step 7/9. This is Histidinol-phosphate aminotransferase from Brucella abortus (strain 2308).